Here is a 279-residue protein sequence, read N- to C-terminus: 1D-myo-inositol 2-acetamido-2-deoxy-alpha-D-glucopyranoside deacetylase (279 aa).

Zn(2+) is bound by residues histidine 12, aspartate 15, and histidine 146.

The protein belongs to the MshB deacetylase family. Zn(2+) serves as cofactor.

The enzyme catalyses 1D-myo-inositol 2-acetamido-2-deoxy-alpha-D-glucopyranoside + H2O = 1D-myo-inositol 2-amino-2-deoxy-alpha-D-glucopyranoside + acetate. Catalyzes the deacetylation of 1D-myo-inositol 2-acetamido-2-deoxy-alpha-D-glucopyranoside (GlcNAc-Ins) in the mycothiol biosynthesis pathway. The polypeptide is 1D-myo-inositol 2-acetamido-2-deoxy-alpha-D-glucopyranoside deacetylase (Mycobacteroides abscessus (strain ATCC 19977 / DSM 44196 / CCUG 20993 / CIP 104536 / JCM 13569 / NCTC 13031 / TMC 1543 / L948) (Mycobacterium abscessus)).